The following is a 296-amino-acid chain: Urease operon transcriptional activator (296 aa).

The HTH araC/xylS-type domain occupies 171–268 (QAITHLITQE…NMTPSQFRLQ (98 aa)). DNA-binding regions (H-T-H motif) lie at residues 188 to 209 (DDVA…NREG) and 235 to 258 (VFQI…KRKY).

Functionally, positive regulator of the expression of the urease operon. This chain is Urease operon transcriptional activator (ureR), found in Escherichia coli.